A 178-amino-acid polypeptide reads, in one-letter code: Ribosome maturation factor RimM (178 aa).

The region spanning 101-178 is the PRC barrel domain; that stretch reads ADEYYWYQLV…VMRVEWDADF (78 aa).

It belongs to the RimM family. In terms of assembly, binds ribosomal protein uS19.

Its subcellular location is the cytoplasm. An accessory protein needed during the final step in the assembly of 30S ribosomal subunit, possibly for assembly of the head region. Essential for efficient processing of 16S rRNA. May be needed both before and after RbfA during the maturation of 16S rRNA. It has affinity for free ribosomal 30S subunits but not for 70S ribosomes. In Pseudomonas putida (strain GB-1), this protein is Ribosome maturation factor RimM.